The primary structure comprises 167 residues: Ubiquitin-fold modifier-conjugating enzyme 1 (167 aa).

Cysteine 116 serves as the catalytic Glycyl thioester intermediate.

It belongs to the ubiquitin-conjugating enzyme family. UFC1 subfamily.

In terms of biological role, E2-like enzyme which forms an intermediate with UFM1 via a thioester linkage. This Anopheles gambiae (African malaria mosquito) protein is Ubiquitin-fold modifier-conjugating enzyme 1.